The chain runs to 499 residues: ALBINO3-like protein 1, chloroplastic (499 aa).

The N-terminal 45 residues, 1 to 45 (MSSTISLKPTHLILSSFSTGKVLQFRRSRFSHTPSSSSSRYRTLV), are a transit peptide targeting the chloroplast. 4 helical membrane-spanning segments follow: residues 115 to 135 (LSTV…TVLV), 184 to 204 (LAGI…PVWI), 263 to 283 (LAYL…IQIM), and 302 to 322 (LLPL…SLYW). Residues 378 to 499 (LKIPREKGGE…QQHSHETEKR (122 aa)) are disordered. Composition is skewed to basic and acidic residues over residues 379-420 (KIPR…RQKA), 430-452 (DKAH…KKTE), and 486-499 (HDTE…TEKR). Residues 397–436 (GERFRLLKEQEAKRRREKEERQKAEAALSNQNTDKAHEQD) are a coiled coil.

This sequence belongs to the OXA1/ALB3/YidC (TC 2.A.9.2) family. In terms of assembly, homodimer. Interacts with ALB3. Interacts with STIC2. As to expression, highly expressed in green tissues.

It localises to the plastid. It is found in the chloroplast thylakoid membrane. Required for the insertion of some light harvesting chlorophyll-binding proteins (LHCP) into the chloroplast thylakoid membrane. Plays a role in the accumulation of some cytochrome b6f components in the thylakoid membrane. Required for the assembly and/or stability of the F(1)F(0) ATP synthase in chloroplast thylakoid membranes. Functions to stabilize or promote assembly of F(1) during its attachment to the membrane-embedded F(0) part. Participates with STIC2 in thylakoid protein targeting. May function with a specific subset of thylakoidal proteins. This chain is ALBINO3-like protein 1, chloroplastic, found in Arabidopsis thaliana (Mouse-ear cress).